Reading from the N-terminus, the 92-residue chain is Small ribosomal subunit protein uS19c (92 aa).

It belongs to the universal ribosomal protein uS19 family.

It localises to the plastid. Its subcellular location is the chloroplast. Protein S19 forms a complex with S13 that binds strongly to the 16S ribosomal RNA. The polypeptide is Small ribosomal subunit protein uS19c (Nandina domestica (Heavenly bamboo)).